A 448-amino-acid chain; its full sequence is High mobility group B protein 15 (448 aa).

An ARID domain is found at 29–120 (VADPRLFMTS…LLNNYEQIYF (92 aa)). Residues 219 to 236 (PQQSHGVLPNTLNISANP) are compositionally biased toward polar residues. Disordered regions lie at residues 219–270 (PQQS…RSGY), 333–352 (KKNG…LPEQ), and 366–448 (VEED…AEQN). Residues 244–255 (TKRRRRRKKSEI) show a composition bias toward basic residues. Positions 263–330 (PKPNRSGYNF…RYRTEMEDYR (68 aa)) form a DNA-binding region, HMG box. Positions 389 to 398 (SIETDPELEE) are enriched in acidic residues. Over residues 399-412 (PSLNPSGPNLNPNP) the composition is skewed to low complexity.

Belongs to the HMGB family.

It is found in the nucleus. Binds preferentially DNA with A/T-rich content. This chain is High mobility group B protein 15 (HMGB15), found in Arabidopsis thaliana (Mouse-ear cress).